A 262-amino-acid polypeptide reads, in one-letter code: Type II restriction enzyme MspI (262 aa).

It carries out the reaction Endonucleolytic cleavage of DNA to give specific double-stranded fragments with terminal 5'-phosphates.. A P subtype restriction enzyme that recognizes the double-stranded sequence 5'-CCGG-3' and cleaves after C-1. The protein is Type II restriction enzyme MspI (mspIR) of Moraxella sp.